A 595-amino-acid polypeptide reads, in one-letter code: D-xylonate dehydratase (595 aa).

Residue Cys-64 coordinates [2Fe-2S] cluster. Glu-96 is a Mg(2+) binding site. Cys-132 is a [2Fe-2S] cluster binding site. A Mg(2+)-binding site is contributed by Asp-133. Cys-205 contributes to the [2Fe-2S] cluster binding site. Glu-467 lines the Mg(2+) pocket.

The protein belongs to the IlvD/Edd family. As to quaternary structure, homotetramer. [2Fe-2S] cluster is required as a cofactor. Mg(2+) serves as cofactor.

The catalysed reaction is D-xylonate = 2-dehydro-3-deoxy-D-arabinonate + H2O. It carries out the reaction D-gluconate = 2-dehydro-3-deoxy-D-gluconate + H2O. The protein operates within carbohydrate metabolism; D-xylose degradation. Its function is as follows. Catalyzes the dehydration of D-xylonate to 2-dehydro-3-deoxy-D-arabinonate during D-xylose degradation. Can also dehydrate D-gluconate, with similar catalytic efficiency. Has weak activity with D-galactonate, D-fuconate and L-arabinonate. This Caulobacter vibrioides (strain ATCC 19089 / CIP 103742 / CB 15) (Caulobacter crescentus) protein is D-xylonate dehydratase.